The chain runs to 558 residues: Xylulose kinase 2 (558 aa).

Substrate contacts are provided by residues aspartate 16, 20–23 (QSMK), serine 111, and aspartate 283. ATP-binding positions include threonine 305 and 456–460 (GASAN).

This sequence belongs to the FGGY kinase family. A divalent metal cation is required as a cofactor.

It is found in the cytoplasm. The catalysed reaction is D-xylulose + ATP = D-xylulose 5-phosphate + ADP + H(+). The protein operates within isoprenoid biosynthesis; carotenoid biosynthesis. Its activity is regulated as follows. Repressed by oxo-clomazone (keto-clomazone), a bleaching herbicide. Its function is as follows. Mediates 1-deoxy-D-xylulose (DX) phosphorylation in the cytoplasm prior to the translocation of 1-deoxy-D-xylulose 5-phosphate into plastids. Can also phosphorylate D-xylulose (Xyl). Uses preferentially ATP as cosubstrate. The chain is Xylulose kinase 2 from Arabidopsis thaliana (Mouse-ear cress).